Reading from the N-terminus, the 719-residue chain is Ferric reductase transmembrane component 4 (719 aa).

Residues 1–18 form the signal peptide; it reads MLLVHIISFLLFFQLSAA. Residues 19–156 lie on the Extracellular side of the membrane; it reads KAPPSKTSLI…YGYYYNHDIP (138 aa). Asparagine 51, asparagine 80, asparagine 101, asparagine 113, asparagine 127, and asparagine 135 each carry an N-linked (GlcNAc...) asparagine glycan. The chain crosses the membrane as a helical span at residues 157-177; that stretch reads YYFGGIICAYFVGVMLLAGLI. Residues 178 to 228 lie on the Cytoplasmic side of the membrane; it reads RFLNYTPIKKIMFQQKLVNYVRGYTTLPTLYEKHAEPFSYLKVITGYLPTR. Residues 229 to 249 form a helical membrane-spanning segment; that stretch reads FETLVILGYLILHTIFMAYKY. The Extracellular portion of the chain corresponds to 250–267; it reads QYDPYHIIFAAHRAEVAH. The helical transmembrane segment at 268–288 threads the bilayer; sequence FVAYRSGILSFAHLPLIVLFA. In terms of domain architecture, Ferric oxidoreductase spans 273 to 407; the sequence is SGILSFAHLP…SGIEWIYAAI (135 aa). The Cytoplasmic segment spans residues 289-304; that stretch reads GRNNFLQLISGLKHTS. Residues 305–325 form a helical membrane-spanning segment; sequence FIVFHKWLGRMMFLDAIIHAA. The heme site is built by histidine 309 and histidine 323. The Extracellular segment spans residues 326–346; the sequence is GFTNYYLYYKKWNTVRLRVYW. A helical transmembrane segment spans residues 347–367; that stretch reads KFGIATTCLAGMLIFFSIAAF. Over 368–373 the chain is Cytoplasmic; the sequence is RRHYYE. Residues 374–394 form a helical membrane-spanning segment; sequence TFMALHIVFAALFLYTCWEHV. Residues histidine 379 and histidine 393 each contribute to the heme site. Position 395 (threonine 395) is a topological domain, extracellular. Residues 396–416 form a helical membrane-spanning segment; sequence NFSGIEWIYAAIAIWGVDRIV. The FAD-binding FR-type domain maps to 408–527; that stretch reads AIWGVDRIVR…EGPYGSKSTA (120 aa). The Cytoplasmic segment spans residues 417–719; sequence RITRIALLGF…IEYLEEYQAW (303 aa). 472–478 provides a ligand contact to FAD; sequence HPFTVMD. 519 to 522 contacts NADP(+); sequence GPYG. 2 stretches are compositionally biased toward polar residues: residues 606–618 and 625–643; these read EKIS…NGET and SSLS…TELP. The interval 606–643 is disordered; that stretch reads EKISSNEVKNGETTAEKAPSSLSNSEKAPSESENTELP. An NADP(+)-binding site is contributed by 685 to 686; the sequence is CG.

It belongs to the ferric reductase (FRE) family. FAD is required as a cofactor.

It is found in the cell membrane. The catalysed reaction is 2 a Fe(II)-siderophore + NADP(+) + H(+) = 2 a Fe(III)-siderophore + NADPH. Its function is as follows. Siderophore-iron reductase responsible for reducing extracellular iron prior to import. Catalyzes the reductive uptake of Fe(3+) bound to dihydroxamate rhodotorulic acid. Fe(3+) is reduced to Fe(2+), which then dissociates from the siderophore and can be imported by the high-affinity Fe(2+) transport complex in the plasma membrane. The protein is Ferric reductase transmembrane component 4 (FRE4) of Saccharomyces cerevisiae (strain ATCC 204508 / S288c) (Baker's yeast).